A 422-amino-acid polypeptide reads, in one-letter code: UDP-N-acetylglucosamine 1-carboxyvinyltransferase (422 aa).

Residue 22 to 23 (KN) coordinates phosphoenolpyruvate. Arginine 94 serves as a coordination point for UDP-N-acetyl-alpha-D-glucosamine. The active-site Proton donor is the cysteine 118. A 2-(S-cysteinyl)pyruvic acid O-phosphothioketal modification is found at cysteine 118. Residues 123-127 (RPVDL), aspartate 309, and isoleucine 331 contribute to the UDP-N-acetyl-alpha-D-glucosamine site.

It belongs to the EPSP synthase family. MurA subfamily.

The protein localises to the cytoplasm. It carries out the reaction phosphoenolpyruvate + UDP-N-acetyl-alpha-D-glucosamine = UDP-N-acetyl-3-O-(1-carboxyvinyl)-alpha-D-glucosamine + phosphate. It functions in the pathway cell wall biogenesis; peptidoglycan biosynthesis. Its function is as follows. Cell wall formation. Adds enolpyruvyl to UDP-N-acetylglucosamine. The protein is UDP-N-acetylglucosamine 1-carboxyvinyltransferase of Cereibacter sphaeroides (strain KD131 / KCTC 12085) (Rhodobacter sphaeroides).